The chain runs to 259 residues: Leucine-rich repeat-containing protein 3B (259 aa).

Positions 1–33 (MNLVDLWLTRSLSMCLLLQSFVLMILCFHSASM) are cleaved as a signal peptide. The 31-residue stretch at 34-64 (CPKGCLCSSSGGLNVTCSNANLKEIPRDLPP) folds into the LRRNT domain. Residue N47 is glycosylated (N-linked (GlcNAc...) asparagine). LRR repeat units follow at residues 65–86 (ETVL…IFKD), 89–110 (QLRV…AFKG), and 114–135 (TLQT…AFNN). An N-linked (GlcNAc...) asparagine glycan is attached at N94. An LRRCT domain is found at 145–197 (NPWHCDCTLQQVLRSMVSNHETAHNVICKTSVLDEHAGRPFLNAANDADLCNL). Residues 205–225 (AMLVTMFGWFTMVISYVVYYV) form a helical membrane-spanning segment.

This sequence belongs to the LRRC3 family.

It localises to the membrane. The polypeptide is Leucine-rich repeat-containing protein 3B (LRRC3B) (Bos taurus (Bovine)).